A 273-amino-acid chain; its full sequence is Transposable element Tc1 transposase (273 aa).

The protein belongs to the transposase 5 family.

The protein localises to the nucleus. Its function is as follows. Probably essential for transposable element Tc1 transposition. The insertion of Tc1 is the main cause of spontaneous mutations. It is an endonuclease which can produce a single strand nick at the 5'-end of the transposon. The protein is Transposable element Tc1 transposase (tc1a) of Caenorhabditis elegans.